The chain runs to 334 residues: MYRIAFDVNGNDNGVAAAVKASCQFLKENDNYEIILVGDEALINNELKLIENIPNSLKIINNPNVPSDVKNFHKSLRENTSMNDSIDLVAQGKADAVISSGDSGTYLACATFKLKRLQGVSRSAFMPLMPTIVGRKFLLLDVGANIECKSEYLVEWAKIANVYARTLLNIVNPRVSLINIGTEDYKGLEIVKEAAKELKDNKFINYIGYSEPRYLLDGVADVAVIDGYGGNLVLKSLEGAILSFKNLLKDKIMAKPIRKFGYLFLKGAFQDVAETLDYRNVGAAWLIGLNGLSIKCHGNSDSKAYLGALNQIKLVIKNNVLEAIKKELNDKPHE.

The protein belongs to the PlsX family. Homodimer. Probably interacts with PlsY.

Its subcellular location is the cytoplasm. It carries out the reaction a fatty acyl-[ACP] + phosphate = an acyl phosphate + holo-[ACP]. It participates in lipid metabolism; phospholipid metabolism. Catalyzes the reversible formation of acyl-phosphate (acyl-PO(4)) from acyl-[acyl-carrier-protein] (acyl-ACP). This enzyme utilizes acyl-ACP as fatty acyl donor, but not acyl-CoA. The chain is Phosphate acyltransferase from Mycoplasmopsis agalactiae (strain NCTC 10123 / CIP 59.7 / PG2) (Mycoplasma agalactiae).